Here is a 299-residue protein sequence, read N- to C-terminus: 4-hydroxy-tetrahydrodipicolinate synthase (299 aa).

T44 contributes to the pyruvate binding site. The active-site Proton donor/acceptor is the Y133. Catalysis depends on K162, which acts as the Schiff-base intermediate with substrate. I204 contacts pyruvate.

The protein belongs to the DapA family. In terms of assembly, homotetramer; dimer of dimers.

Its subcellular location is the cytoplasm. It carries out the reaction L-aspartate 4-semialdehyde + pyruvate = (2S,4S)-4-hydroxy-2,3,4,5-tetrahydrodipicolinate + H2O + H(+). Its pathway is amino-acid biosynthesis; L-lysine biosynthesis via DAP pathway; (S)-tetrahydrodipicolinate from L-aspartate: step 3/4. In terms of biological role, catalyzes the condensation of (S)-aspartate-beta-semialdehyde [(S)-ASA] and pyruvate to 4-hydroxy-tetrahydrodipicolinate (HTPA). In Thermus thermophilus (strain ATCC BAA-163 / DSM 7039 / HB27), this protein is 4-hydroxy-tetrahydrodipicolinate synthase.